Reading from the N-terminus, the 448-residue chain is Ribosomal protein uS12 methylthiotransferase RimO (448 aa).

The MTTase N-terminal domain maps to 7-119 (QSLHLISLGC…IDSMIAQRRS (113 aa)). The [4Fe-4S] cluster site is built by Cys-16, Cys-50, Cys-82, Cys-151, Cys-155, and Cys-158. A Radical SAM core domain is found at 137–366 (IGSSFHAYIK…NKIIQSQYKA (230 aa)).

Belongs to the methylthiotransferase family. RimO subfamily. [4Fe-4S] cluster serves as cofactor.

The protein localises to the cytoplasm. It carries out the reaction L-aspartate(89)-[ribosomal protein uS12]-hydrogen + (sulfur carrier)-SH + AH2 + 2 S-adenosyl-L-methionine = 3-methylsulfanyl-L-aspartate(89)-[ribosomal protein uS12]-hydrogen + (sulfur carrier)-H + 5'-deoxyadenosine + L-methionine + A + S-adenosyl-L-homocysteine + 2 H(+). Functionally, catalyzes the methylthiolation of an aspartic acid residue of ribosomal protein uS12. The sequence is that of Ribosomal protein uS12 methylthiotransferase RimO from Helicobacter hepaticus (strain ATCC 51449 / 3B1).